The chain runs to 280 residues: MSNITVTNLHKSYGDVDALEDVSFEILDGEFVVILGESGAGKSTLLRCLNGLTEPTTGSVKIDGEPVNGPRDDVGMIFQQHNIIEEMTAYTNALSGSLNRTSLVRSLFQWNDREEKLDALRALDTVGLLDDAEQRAGRMSGGQQQRVGISRALVQDPNLLLADEPVASLDPASAESVMGYIKDAADQHDLTTLASLHQVNLAREFGQRFIGMKDGRVIFDGYRDDLTFDVIDDIYGNIQTDAIRTGDDANADVAPTTSSDGGTDAAGGPDQQPASDPHLS.

The ABC transporter domain occupies 4–239 (ITVTNLHKSY…VIDDIYGNIQ (236 aa)). 36–43 (GESGAGKS) serves as a coordination point for ATP. Residues 246–280 (GDDANADVAPTTSSDGGTDAAGGPDQQPASDPHLS) are disordered.

Belongs to the ABC transporter superfamily. Phosphonates importer (TC 3.A.1.9.1) family. As to quaternary structure, the complex is composed of two ATP-binding proteins (PhnC), two transmembrane proteins (PhnE) and a solute-binding protein (PhnD).

It is found in the cell membrane. The catalysed reaction is phosphonate(out) + ATP + H2O = phosphonate(in) + ADP + phosphate + H(+). In terms of biological role, part of the ABC transporter complex PhnCDE involved in phosphonates import. Responsible for energy coupling to the transport system. This chain is Phosphonates import ATP-binding protein PhnC, found in Halobacterium salinarum (strain ATCC 700922 / JCM 11081 / NRC-1) (Halobacterium halobium).